Here is a 124-residue protein sequence, read N- to C-terminus: Small ribosomal subunit protein bS6 (124 aa).

The interval 96–124 is disordered; that stretch reads ETAPSPMMKEVQREEARKAAQTTTEGQPA. The span at 115–124 shows a compositional bias: polar residues; the sequence is AQTTTEGQPA.

It belongs to the bacterial ribosomal protein bS6 family.

Its function is as follows. Binds together with bS18 to 16S ribosomal RNA. In Cupriavidus metallidurans (strain ATCC 43123 / DSM 2839 / NBRC 102507 / CH34) (Ralstonia metallidurans), this protein is Small ribosomal subunit protein bS6.